A 317-amino-acid chain; its full sequence is MAELACFCYPHLENDSYKFIPFNSLAIKCMLTAKVDKKDQDKFYNSIVYGIAPPPQFKKRYNTNDNSRGMNYETPMFNKVAILICEALNSIKVTQSDVANVLSRVVSVRHLENLVLRKENHQDVLFHSKELLLKAVLIAIGQSKEIETTATAEGGEIVFQNAAFTMWKLTYLDHKLMPILDQNFIEYKITLNEDKPISDICVKELVAELRWQYNRFAVITHGKGHYRVVKYSSVANHADRVFATYKNNAKSGNVTDFNLLDQRIIWQNWYAFTSSMKQGNTLDVCKKLLFQKMKQEKNPFKGLSTDRKMDEVSHVGI.

ATP is bound by residues 107 to 109 (SVR), Lys-188, and 221 to 223 (HGK). An RNA-binding region spans residues 205 to 241 (LVAELRWQYNRFAVITHGKGHYRVVKYSSVANHADRV). Residue His-225 is the For NTPase and RTPase activities of the active site. ATP is bound at residue Arg-227.

Belongs to the rotavirus NSP2 family. Homooctamer. Interacts with VP1; this interaction is weak. Interacts with NSP5; this interaction leads to up-regulation of NSP5 phosphorylation and formation of viral factories. Interacts with host DCP1A, DCP1B, DDX6, EDC4 and EIF2S1/eIF2-alpha; these interactions are probably part of the sequestration of some host SGs and PBs proteins in viral factories. Mg(2+) serves as cofactor.

Its subcellular location is the host cytoplasm. In terms of biological role, participates in replication and packaging of the viral genome. Plays a crucial role, together with NSP5, in the formation of virus factories (viroplasms), which are large inclusions in the host cytoplasm where replication intermediates are assembled and viral RNA replication takes place. Displays ssRNA binding, NTPase, RNA triphosphatase (RTPase) and ATP-independent helix-unwinding activities. The unwinding activity may prepare and organize plus-strand RNAs for packaging and replication by removing interfering secondary structures. The RTPase activity plays a role in the removal of the gamma-phosphate from the rotavirus RNA minus strands of dsRNA genome segments. Participates in the selective exclusion of host proteins from stress granules (SG) and P bodies (PB). Also participates in the sequestration of these remodeled organelles in viral factories. This Rotavirus A (strain RVA/Human/United States/P/1974/G3P1A[8]) (RV-A) protein is Non-structural protein 2.